Consider the following 259-residue polypeptide: MLGAIAYTGNKQSLLPELKPHFPKYDRFVDLFCGGLSVSLNVNGPVLANDIQEPIIEMYKRLINVSWDDVLKVIKQYKLSKTSKEEFLKLREDYNKTRDPLLLYVLHFHGFSNMIRINDKGNFTTPFGKRTINKNSEKRFNHFKQNCDKIIFSSLHFKDVKILDGDFVYVDPPYLITVADYNKFWSEEEEKDLLNLLDSLNDRGIKFGLSNVLEHHGKENTLLKEWSKKYNVKHLNKKYVFNIYHSKEKNGTDEVYIFN.

S-adenosyl-L-methionine contacts are provided by tyrosine 7, lysine 11, aspartate 50, and aspartate 171.

It belongs to the N(4)/N(6)-methyltransferase family. As to quaternary structure, monomer.

The catalysed reaction is a 2'-deoxyadenosine in DNA + S-adenosyl-L-methionine = an N(6)-methyl-2'-deoxyadenosine in DNA + S-adenosyl-L-homocysteine + H(+). An alpha subtpe methyltransferase that recognizes the double-stranded sequence 5'-GATC-3' and methylates A-2 on both strands. May prevent degradation of viral DNA by the host restriction-modification antiviral defense system. The chain is DNA adenine methylase from Enterobacteria phage T2 (Bacteriophage T2).